Here is a 227-residue protein sequence, read N- to C-terminus: Octanoyltransferase (227 aa).

In terms of domain architecture, BPL/LPL catalytic spans 31 to 209 (ANTIDEIWLV…VFLSLLGGTN (179 aa)). Residues 71–78 (RGGKITYH), 139–141 (SIG), and 152–154 (GLA) each bind substrate. The active-site Acyl-thioester intermediate is cysteine 170.

This sequence belongs to the LipB family.

The protein localises to the cytoplasm. The enzyme catalyses octanoyl-[ACP] + L-lysyl-[protein] = N(6)-octanoyl-L-lysyl-[protein] + holo-[ACP] + H(+). It functions in the pathway protein modification; protein lipoylation via endogenous pathway; protein N(6)-(lipoyl)lysine from octanoyl-[acyl-carrier-protein]: step 1/2. Functionally, catalyzes the transfer of endogenously produced octanoic acid from octanoyl-acyl-carrier-protein onto the lipoyl domains of lipoate-dependent enzymes. Lipoyl-ACP can also act as a substrate although octanoyl-ACP is likely to be the physiological substrate. This chain is Octanoyltransferase, found in Baumannia cicadellinicola subsp. Homalodisca coagulata.